We begin with the raw amino-acid sequence, 258 residues long: Imidazole glycerol phosphate synthase subunit HisF (258 aa).

Residues aspartate 11 and aspartate 130 contribute to the active site.

This sequence belongs to the HisA/HisF family. Heterodimer of HisH and HisF.

The protein resides in the cytoplasm. It carries out the reaction 5-[(5-phospho-1-deoxy-D-ribulos-1-ylimino)methylamino]-1-(5-phospho-beta-D-ribosyl)imidazole-4-carboxamide + L-glutamine = D-erythro-1-(imidazol-4-yl)glycerol 3-phosphate + 5-amino-1-(5-phospho-beta-D-ribosyl)imidazole-4-carboxamide + L-glutamate + H(+). It participates in amino-acid biosynthesis; L-histidine biosynthesis; L-histidine from 5-phospho-alpha-D-ribose 1-diphosphate: step 5/9. Functionally, IGPS catalyzes the conversion of PRFAR and glutamine to IGP, AICAR and glutamate. The HisF subunit catalyzes the cyclization activity that produces IGP and AICAR from PRFAR using the ammonia provided by the HisH subunit. The polypeptide is Imidazole glycerol phosphate synthase subunit HisF (Xanthobacter autotrophicus (strain ATCC BAA-1158 / Py2)).